The sequence spans 780 residues: WD repeat-containing protein 27 (780 aa).

13 WD repeats span residues 3 to 56 (TPPE…VWSS), 61 to 100 (HQLLTLQGHHQLITAVVFGNQIDPLLLCSASEDYIIMWNV), 111 to 150 (LTPRGTILGSLLQTVLCLRFSLDDRAIAVCAGNKISVMDV), 154 to 193 (SVLVELKGHQGSVTAVEFCPWQAHTLISVSEDRSFKVWDF), 200 to 236 (YSSSILTAYPLLNLLINEENQQLVTGSADGQLWIFSL), 291 to 335 (FPIL…LASF), 342 to 385 (HFKE…VLEI), 500 to 540 (NLSR…VFNA), 544 to 582 (GPPAAFSGHDGAVSTICWSHDKRWLLSTGRDRTLRVWSV), 588 to 639 (MLLL…RYKP), 644 to 685 (KPIF…VFDL), 691 to 738 (AAVL…LWDL), and 752 to 779 (AFCTVLQDTQIRLLKWPSTQQLLSLSQP).

This chain is WD repeat-containing protein 27 (Wdr27), found in Mus musculus (Mouse).